The sequence spans 351 residues: Polyribonucleotide 5'-hydroxyl-kinase TK1956 (351 aa).

Residue 34–41 (GGVDSGKS) coordinates ATP.

A divalent metal cation is required as a cofactor.

It carries out the reaction a 5'-end dephospho-2'-deoxyribonucleoside-DNA + ATP = a 5'-end 5'-phospho-2'-deoxyribonucleoside-DNA + ADP + H(+). The enzyme catalyses a 5'-end dephospho-ribonucleoside-RNA + ATP = a 5'-end 5'-phospho-ribonucleoside-RNA + ADP + H(+). Its function is as follows. Polynucleotide kinase that can phosphorylate the 5'-hydroxyl groups of both single-stranded RNA (ssRNA) and single-stranded DNA (ssDNA). Exhibits a strong preference for ssRNA. In Thermococcus kodakarensis (strain ATCC BAA-918 / JCM 12380 / KOD1) (Pyrococcus kodakaraensis (strain KOD1)), this protein is Polyribonucleotide 5'-hydroxyl-kinase TK1956.